The sequence spans 181 residues: Bifunctional protein PyrR (181 aa).

Substrate-binding positions include 39 to 40 (RR), 104 to 112 (DDVLYTGRT), Arg137, and Val161. Residues 100–112 (VILVDDVLYTGRT) carry the PRPP-binding motif.

Belongs to the purine/pyrimidine phosphoribosyltransferase family. PyrR subfamily.

The catalysed reaction is UMP + diphosphate = 5-phospho-alpha-D-ribose 1-diphosphate + uracil. Regulates the transcription of the pyrimidine nucleotide (pyr) operon in response to exogenous pyrimidines. In terms of biological role, also displays a weak uracil phosphoribosyltransferase activity which is not physiologically significant. This Pasteurella multocida (strain Pm70) protein is Bifunctional protein PyrR.